Reading from the N-terminus, the 315-residue chain is Cobalamin biosynthesis protein CobD (315 aa).

7 consecutive transmembrane segments (helical) span residues 1 to 21 (MLDI…YWFP), 50 to 70 (VFGG…PFII), 79 to 99 (VIYH…KSLH), 151 to 171 (DGII…AMMY), 209 to 229 (VTGI…FYSI), 250 to 270 (AAAA…GEVV), and 291 to 311 (IILM…IICF).

Belongs to the CobD/CbiB family.

The protein resides in the cell membrane. It participates in cofactor biosynthesis; adenosylcobalamin biosynthesis. In terms of biological role, converts cobyric acid to cobinamide by the addition of aminopropanol on the F carboxylic group. This chain is Cobalamin biosynthesis protein CobD, found in Clostridium acetobutylicum (strain ATCC 824 / DSM 792 / JCM 1419 / IAM 19013 / LMG 5710 / NBRC 13948 / NRRL B-527 / VKM B-1787 / 2291 / W).